The primary structure comprises 471 residues: Methylenetetrahydrofolate--tRNA-(uracil-5-)-methyltransferase TrmFO (471 aa).

13–18 contributes to the FAD binding site; that stretch reads GGGLAG.

Belongs to the MnmG family. TrmFO subfamily. It depends on FAD as a cofactor.

It is found in the cytoplasm. The enzyme catalyses uridine(54) in tRNA + (6R)-5,10-methylene-5,6,7,8-tetrahydrofolate + NADH + H(+) = 5-methyluridine(54) in tRNA + (6S)-5,6,7,8-tetrahydrofolate + NAD(+). It catalyses the reaction uridine(54) in tRNA + (6R)-5,10-methylene-5,6,7,8-tetrahydrofolate + NADPH + H(+) = 5-methyluridine(54) in tRNA + (6S)-5,6,7,8-tetrahydrofolate + NADP(+). Catalyzes the folate-dependent formation of 5-methyl-uridine at position 54 (M-5-U54) in all tRNAs. This is Methylenetetrahydrofolate--tRNA-(uracil-5-)-methyltransferase TrmFO from Azorhizobium caulinodans (strain ATCC 43989 / DSM 5975 / JCM 20966 / LMG 6465 / NBRC 14845 / NCIMB 13405 / ORS 571).